Consider the following 133-residue polypeptide: Small ribosomal subunit protein eS8 (133 aa).

The tract at residues 1-22 (MGFYQGPDNRKITGGLKGKHRD) is disordered.

This sequence belongs to the eukaryotic ribosomal protein eS8 family. Part of the 30S ribosomal subunit.

The sequence is that of Small ribosomal subunit protein eS8 from Saccharolobus islandicus (strain Y.N.15.51 / Yellowstone #2) (Sulfolobus islandicus).